The primary structure comprises 305 residues: Secreted mono- and diacylglycerol lipase A (305 aa).

Positions 1 to 26 (MRLSFFTALSAVASLGYALPGKLQSR) are cleaved as a signal peptide. Intrachain disulfides connect cysteine 62–cysteine 67 and cysteine 129–cysteine 132. Catalysis depends on serine 171, which acts as the Nucleophile. Aspartate 225 serves as the catalytic Charge relay system. Asparagine 251 is a glycosylation site (N-linked (GlcNAc...) asparagine). Residue histidine 285 is the Charge relay system of the active site. Positions 303–305 (KRV) are cleaved as a propeptide — removed in mature form.

This sequence belongs to the AB hydrolase superfamily. Lipase family. Class 3 subfamily. Post-translationally, multiple forms of this lipase are due to the presence of different carbohydrates, which may contribute to the stability of this lipase but not to the enzyme activity.

Its subcellular location is the secreted. It carries out the reaction a monoacylglycerol + H2O = glycerol + a fatty acid + H(+). The enzyme catalyses a diacylglycerol + H2O = a monoacylglycerol + a fatty acid + H(+). Both Fe(3+) and Hg(2+) inhibit the activity significantly. Secreted lipase strictly specific to mono- and diacylglycerol, but not triacylglycerol. Hydrolyzes long-chain monoacylglycerols most efficiently with the highest activities observed on 1- and 3- monopalmitoyl-sn-glycerol or 1-monostearoyl-rac-glycerol. Prefers to attack alpha positions to beta positions of monoacylglycerol, but shows no stereospecificity on mono- and diacylglycerol. This chain is Secreted mono- and diacylglycerol lipase A, found in Penicillium camembertii.